Here is a 285-residue protein sequence, read N- to C-terminus: ATP phosphoribosyltransferase (285 aa).

The protein belongs to the ATP phosphoribosyltransferase family. Long subfamily. The cofactor is Mg(2+).

The protein resides in the cytoplasm. The enzyme catalyses 1-(5-phospho-beta-D-ribosyl)-ATP + diphosphate = 5-phospho-alpha-D-ribose 1-diphosphate + ATP. It functions in the pathway amino-acid biosynthesis; L-histidine biosynthesis; L-histidine from 5-phospho-alpha-D-ribose 1-diphosphate: step 1/9. Its activity is regulated as follows. Feedback inhibited by histidine. Its function is as follows. Catalyzes the condensation of ATP and 5-phosphoribose 1-diphosphate to form N'-(5'-phosphoribosyl)-ATP (PR-ATP). Has a crucial role in the pathway because the rate of histidine biosynthesis seems to be controlled primarily by regulation of HisG enzymatic activity. This Methanocella arvoryzae (strain DSM 22066 / NBRC 105507 / MRE50) protein is ATP phosphoribosyltransferase.